The following is a 207-amino-acid chain: Protein FAM177A1 (207 aa).

Met1 carries the post-translational modification N-acetylmethionine. The residue at position 65 (Ser65) is a Phosphoserine. Thr66 carries the post-translational modification Phosphothreonine. Positions Ile131–Gln170 form a coiled coil. The segment at Glu142 to Thr176 is disordered. The span at Gln157–Thr176 shows a compositional bias: polar residues.

Belongs to the FAM177 family.

This is Protein FAM177A1 (Fam177a1) from Mus musculus (Mouse).